The sequence spans 105 residues: Cell division protein FtsB (105 aa).

Over 1–3 (MKP) the chain is Cytoplasmic. The chain crosses the membrane as a helical span at residues 4–21 (FVLVLFALLALLQYRLWF). The Periplasmic portion of the chain corresponds to 22–105 (GENSLTEYFT…RSSEQSQDNQ (84 aa)). A coiled-coil region spans residues 38–75 (HQQSGNAELLERNEVLKEEIQDLKSGTEALEERARNEL).

It belongs to the FtsB family. Part of a complex composed of FtsB, FtsL and FtsQ.

It is found in the cell inner membrane. Its function is as follows. Essential cell division protein. May link together the upstream cell division proteins, which are predominantly cytoplasmic, with the downstream cell division proteins, which are predominantly periplasmic. This Shewanella amazonensis (strain ATCC BAA-1098 / SB2B) protein is Cell division protein FtsB.